A 352-amino-acid polypeptide reads, in one-letter code: RING finger protein 39 (352 aa).

The segment at 20-67 (CPLCGGPFEDPVLLACEHSFCRSCLARCWGSPAAPGSEEATPSCPCCG) adopts an RING-type zinc-finger fold. The tract at residues 98-118 (PGARTGRRRGGRIPTMGCLDP) is disordered. In terms of domain architecture, B30.2/SPRY spans 142–352 (EDLPEDYPVV…APLRIVPGEA (211 aa)).

As to expression, expressed in the hippocampus. Expression is rapidly up-regulated in granule cells of the dentate gyrus after LTP induction.

The protein resides in the cytoplasm. It carries out the reaction S-ubiquitinyl-[E2 ubiquitin-conjugating enzyme]-L-cysteine + [acceptor protein]-L-lysine = [E2 ubiquitin-conjugating enzyme]-L-cysteine + N(6)-ubiquitinyl-[acceptor protein]-L-lysine.. Its pathway is protein modification; protein ubiquitination. In terms of biological role, plays an inhibitory role in anti-RNA viral innate immunity by targeting the adapter DDX3X and promoting its 'Lys-48'-linked polyubiquitination. Alternatively, enhances the cGAS-STING pathway activation by promoting 'Lys-63'-linked ubiquitination of STING1, facilitating the STING1-TBK1 complex formation and STING1 activation. The polypeptide is RING finger protein 39 (Rnf39) (Rattus norvegicus (Rat)).